A 172-amino-acid chain; its full sequence is Sec-independent protein translocase protein TatB (172 aa).

A helical transmembrane segment spans residues methionine 1–glycine 21.

This sequence belongs to the TatB family. As to quaternary structure, the Tat system comprises two distinct complexes: a TatABC complex, containing multiple copies of TatA, TatB and TatC subunits, and a separate TatA complex, containing only TatA subunits. Substrates initially bind to the TatABC complex, which probably triggers association of the separate TatA complex to form the active translocon.

It localises to the cell inner membrane. Its function is as follows. Part of the twin-arginine translocation (Tat) system that transports large folded proteins containing a characteristic twin-arginine motif in their signal peptide across membranes. Together with TatC, TatB is part of a receptor directly interacting with Tat signal peptides. TatB may form an oligomeric binding site that transiently accommodates folded Tat precursor proteins before their translocation. This is Sec-independent protein translocase protein TatB from Rhodopseudomonas palustris (strain BisB18).